We begin with the raw amino-acid sequence, 100 residues long: Small cysteine and glycine repeat-containing protein 3 (100 aa).

The 13 X 2 AA repeats of CG stretch occupies residues 4 to 82; sequence CGCGSCGGCG…RRTCRSCGCG (79 aa).

It belongs to the KRTAP type 28 family.

Its function is as follows. In the hair cortex, hair keratin intermediate filaments are embedded in an interfilamentous matrix, consisting of hair keratin-associated proteins (KRTAP), which are essential for the formation of a rigid and resistant hair shaft through their extensive disulfide bond cross-linking with abundant cysteine residues of hair keratins. The matrix proteins include the high-sulfur and high-glycine-tyrosine keratins. The sequence is that of Small cysteine and glycine repeat-containing protein 3 from Homo sapiens (Human).